Here is a 95-residue protein sequence, read N- to C-terminus: Cytosolic calcium-binding protein 3 (95 aa).

Repeat copies occupy residues 30-35, 39-43, 54-59, 67-71, 75-79, and 90-94. Positions 30–94 are 6 X 5 AA approximate repeats of V-E-E-K-K; sequence VEDAEKTNED…AEEVAVEKAK (65 aa). The interval 54-95 is disordered; that stretch reads VEEEKKAEEVTETPEEKKTEALEEKQTEVAAAEEVAVEKAKE. Basic and acidic residues predominate over residues 55-80; it reads EEEKKAEEVTETPEEKKTEALEEKQT.

Low levels in roots (e.g. in cambium) and barely expressed in stems, shoots, flowers, siliques and leaves.

Its subcellular location is the cytoplasm. It localises to the cytosol. Functionally, binds calcium Ca(2+) and may act as a signal mediator to buffer Ca(2+). The sequence is that of Cytosolic calcium-binding protein 3 from Arabidopsis thaliana (Mouse-ear cress).